The primary structure comprises 104 residues: MGQAVKVLQLFKTLHRTRQQVFKNDARALEAARIKINEEFKKNKSETSPKKIEELMKIGSDVELLLRTSVIQGIHTDHNTLKLVPRKDLLVENVPYCDAPTQKQ.

The residue at position 60 (Ser-60) is a Phosphoserine.

This sequence belongs to the complex I LYR family. In terms of assembly, interacts with UQCRFS1.

Its subcellular location is the mitochondrion matrix. Assembly factor required for Rieske Fe-S protein UQCRFS1 incorporation into the cytochrome b-c1 (CIII) complex. Functions as a chaperone, binding to this subunit within the mitochondrial matrix and stabilizing it prior to its translocation and insertion into the late CIII dimeric intermediate within the mitochondrial inner membrane. The sequence is that of Complex III assembly factor LYRM7 (LYRM7) from Pongo abelii (Sumatran orangutan).